Consider the following 198-residue polypeptide: Ribonuclease HII (198 aa).

The RNase H type-2 domain occupies 10-198 (QLVAGVDEVG…PVKRALGLAS (189 aa)). Residues D16, E17, and D108 each contribute to the a divalent metal cation site.

Belongs to the RNase HII family. Requires Mn(2+) as cofactor. It depends on Mg(2+) as a cofactor.

Its subcellular location is the cytoplasm. The enzyme catalyses Endonucleolytic cleavage to 5'-phosphomonoester.. Functionally, endonuclease that specifically degrades the RNA of RNA-DNA hybrids. The protein is Ribonuclease HII of Escherichia coli O81 (strain ED1a).